The sequence spans 313 residues: Olfactory receptor 2B6 (313 aa).

Over 1-27 (MSWANESITGEFVLLGFSDQPWLEFPL) the chain is Extracellular. N-linked (GlcNAc...) asparagine glycosylation is present at Asn5. A helical membrane pass occupies residues 28 to 48 (FVVFLTSYIVTIFGNLNIILV). Residues 49 to 57 (SHLDPKLHT) are Cytoplasmic-facing. Residues 58-78 (PMYFFLTNLSVIDLCYITCTV) traverse the membrane as a helical segment. Over 79-97 (PQMLVNLRSIRKVISFGGC) the chain is Extracellular. Residues Cys97 and Cys189 are joined by a disulfide bond. A helical transmembrane segment spans residues 98 to 118 (VVQLFMFLALGATECVLLPVM). Topologically, residues 119-143 (SFDRFVAICRPLHYSVIMHQRLCLQ) are cytoplasmic. The helical transmembrane segment at 144 to 164 (LAAVSWIIGFGNSVWLSILTL) threads the bilayer. The Extracellular segment spans residues 165–200 (QLPRCGHYVIDHFLCEVPALLKLSCVDVTANEAELF). The chain crosses the membrane as a helical span at residues 201–221 (FVSVFFHLTPLSLILTSYAFI). At 222–244 (ARAILKIQSAEGRQKAFGTCSSH) the chain is on the cytoplasmic side. A helical transmembrane segment spans residues 245-265 (LIVVSLFYGTALSVYFLPPSP). Residues 266–271 (HSKNRR) lie on the Extracellular side of the membrane. The helical transmembrane segment at 272–292 (KMVPLFYGIIAPMLNPLIYTL) threads the bilayer. At 293–313 (RNKEVKDAFKRLIKRVFLSKN) the chain is on the cytoplasmic side.

Belongs to the G-protein coupled receptor 1 family.

It is found in the cell membrane. Odorant receptor. The sequence is that of Olfactory receptor 2B6 from Mus musculus (Mouse).